The chain runs to 548 residues: Membrane protein insertase YidC (548 aa).

A helical membrane pass occupies residues 6–26; sequence NLLVIALLFVSFMIWQAWEQD. A disordered region spans residues 28–55; the sequence is NPQPQAQQTTQTTTTAAGSAADQGVPAS. Positions 30 to 50 are enriched in low complexity; sequence QPQAQQTTQTTTTAAGSAADQ. 4 consecutive transmembrane segments (helical) span residues 350-370, 420-440, 458-478, and 499-519; these read FVGN…GIMY, LGGC…YYML, LSAQ…MFFI, and PVIF…YYIV.

It belongs to the OXA1/ALB3/YidC family. Type 1 subfamily. In terms of assembly, interacts with the Sec translocase complex via SecD. Specifically interacts with transmembrane segments of nascent integral membrane proteins during membrane integration.

It localises to the cell inner membrane. Its function is as follows. Required for the insertion and/or proper folding and/or complex formation of integral membrane proteins into the membrane. Involved in integration of membrane proteins that insert both dependently and independently of the Sec translocase complex, as well as at least some lipoproteins. Aids folding of multispanning membrane proteins. This is Membrane protein insertase YidC from Escherichia coli O139:H28 (strain E24377A / ETEC).